Here is a 1000-residue protein sequence, read N- to C-terminus: Putative methyl-accepting chemotaxis protein sll0041 (1000 aa).

A disordered region spans residues 1 to 59; that stretch reads MTQNPSSDRRPDTAQSVANGETLDGALFTGLTDTAAAQDESSETSASFATIDGEDKSEV. GAF domains lie at 342–478 and 509–650; these read EIQG…QTTL and NSEQ…GLAL. In terms of domain architecture, HAMP spans 671–722; it reads EKMQKRALELLMEVDPVSRGDLTIRAHVTEDEIGTIADSYNATIESLRRIVT. Residues 727–963 form the Methyl-accepting transducer domain; sequence AASQFTETTD…SVTQTMALVA (237 aa).

This sequence belongs to the methyl-accepting chemotaxis (MCP) protein family.

The protein is Putative methyl-accepting chemotaxis protein sll0041 of Synechocystis sp. (strain ATCC 27184 / PCC 6803 / Kazusa).